The primary structure comprises 238 residues: Large ribosomal subunit protein uL2 (238 aa).

Residues 200-238 are disordered; that stretch reads HGGGLHQSVSRPSTVSRNAPPGRKVGHIAARRTGRKEGK. Residues 206–216 are compositionally biased toward polar residues; that stretch reads QSVSRPSTVSR. Over residues 223 to 238 the composition is skewed to basic residues; the sequence is KVGHIAARRTGRKEGK.

It belongs to the universal ribosomal protein uL2 family. Part of the 50S ribosomal subunit. Forms a bridge to the 30S subunit in the 70S ribosome.

Its function is as follows. One of the primary rRNA binding proteins. Required for association of the 30S and 50S subunits to form the 70S ribosome, for tRNA binding and peptide bond formation. It has been suggested to have peptidyltransferase activity; this is somewhat controversial. Makes several contacts with the 16S rRNA in the 70S ribosome. This chain is Large ribosomal subunit protein uL2, found in Saccharolobus islandicus (strain Y.N.15.51 / Yellowstone #2) (Sulfolobus islandicus).